Here is a 353-residue protein sequence, read N- to C-terminus: Mitogen-activated protein kinase FUS3 (353 aa).

One can recognise a Protein kinase domain in the interval Phe13 to Leu309. ATP is bound by residues Leu19–Val27 and Lys42. The active-site Proton acceptor is the Asp137. A Phosphothreonine modification is found at Thr180. Residues Thr180–Tyr182 carry the TXY motif. Tyr182 carries the phosphotyrosine modification. A Glycyl lysine isopeptide (Lys-Gly) (interchain with G-Cter in ubiquitin) cross-link involves residue Lys345.

This sequence belongs to the protein kinase superfamily. CMGC Ser/Thr protein kinase family. MAP kinase subfamily. In terms of assembly, in the nucleus, FUS3 forms a complex with DIG1, DIG2 and STE12. The interaction of FUS3 with STE12 depends on the presence of both DIG1 and DIG2. STE12 is lost from FUS3/DIG1/DIG2 complex after pheromone treatment. During its activation and phosphorylation, FUS3 forms a membrane-associated complex with the scaffold protein STE5, the MAPKK STE7, the MAPKKK STE11, and the G-protein beta subunit GBB/STE4; interacting directly with STE7 and STE5. Requires Mg(2+) as cofactor. Post-translationally, dually phosphorylated on Thr-180 and Tyr-182 by STE7 in response to pheromone induction, which activates the enzyme. Activated FUS3 initiates a feedback signal, down-regulating phosphorylation of both, FUS3 and KSS1.

It is found in the nucleus. The protein localises to the cytoplasm. It localises to the periplasm. The catalysed reaction is L-seryl-[protein] + ATP = O-phospho-L-seryl-[protein] + ADP + H(+). It catalyses the reaction L-threonyl-[protein] + ATP = O-phospho-L-threonyl-[protein] + ADP + H(+). With respect to regulation, activated by tyrosine and threonine phosphorylation after pheromone treatment. Functionally, together with closely related KSS1, FUS3 is the final kinase in the signal transduction cascade regulating activation/repression of the mating and filamentation pathways, induced by pheromone and nitrogen/carbon limitation, respectively. Phosphorylated FUS3 activates the mating but suppresses the filamentation pathway, whereas activated KSS1 activates both pathways. Pheromone-activated FUS3 functions by inhibiting the binding of the transcriptional activator STE12 to filamentation specific genes while inducing its binding to and activity at mating specific genes. Non-activated FUS3 has a repressive effect on STE12 transcriptional activity. KSS1 can partially compensate for the lack of FUS3 but mating efficiency is reduced and the filamentation program is partially activated upon pheromone signaling. FUS3 phosphorylates STE7, STE5, FAR1, DIG1, DIG2 and STE12. The polypeptide is Mitogen-activated protein kinase FUS3 (FUS3) (Saccharomyces cerevisiae (strain ATCC 204508 / S288c) (Baker's yeast)).